Consider the following 101-residue polypeptide: NADH-quinone oxidoreductase subunit K 1 (101 aa).

3 consecutive transmembrane segments (helical) span residues 4 to 24 (IGTM…TVGV), 31 to 51 (VVIL…LVAF), and 64 to 84 (IFVM…VIAF).

The protein belongs to the complex I subunit 4L family. In terms of assembly, NDH-1 is composed of 14 different subunits. Subunits NuoA, H, J, K, L, M, N constitute the membrane sector of the complex.

Its subcellular location is the cell inner membrane. It catalyses the reaction a quinone + NADH + 5 H(+)(in) = a quinol + NAD(+) + 4 H(+)(out). Its function is as follows. NDH-1 shuttles electrons from NADH, via FMN and iron-sulfur (Fe-S) centers, to quinones in the respiratory chain. The immediate electron acceptor for the enzyme in this species is believed to be ubiquinone. Couples the redox reaction to proton translocation (for every two electrons transferred, four hydrogen ions are translocated across the cytoplasmic membrane), and thus conserves the redox energy in a proton gradient. In Koribacter versatilis (strain Ellin345), this protein is NADH-quinone oxidoreductase subunit K 1.